We begin with the raw amino-acid sequence, 496 residues long: Glycerol kinase (496 aa).

T11 serves as a coordination point for ADP. Residues T11, S12, and S13 each contribute to the ATP site. A sn-glycerol 3-phosphate-binding site is contributed by T11. ADP is bound at residue R15. The sn-glycerol 3-phosphate site is built by R81, E82, Y133, and D242. Glycerol-binding residues include R81, E82, Y133, D242, and Q243. ADP-binding residues include T264 and G307. T264, G307, Q311, and G412 together coordinate ATP. G412 and N416 together coordinate ADP.

Belongs to the FGGY kinase family.

The enzyme catalyses glycerol + ATP = sn-glycerol 3-phosphate + ADP + H(+). Its pathway is polyol metabolism; glycerol degradation via glycerol kinase pathway; sn-glycerol 3-phosphate from glycerol: step 1/1. Inhibited by fructose 1,6-bisphosphate (FBP). Functionally, key enzyme in the regulation of glycerol uptake and metabolism. Catalyzes the phosphorylation of glycerol to yield sn-glycerol 3-phosphate. The protein is Glycerol kinase of Albidiferax ferrireducens (strain ATCC BAA-621 / DSM 15236 / T118) (Rhodoferax ferrireducens).